The following is a 478-amino-acid chain: Ninja-family protein 7 (478 aa).

Disordered stretches follow at residues 1 to 247, 336 to 374, and 454 to 478; these read MDDD…LTPG, SFTA…EKKA, and DAPA…SAEN. A compositionally biased stretch (basic and acidic residues) spans 23–35; that stretch reads KARDAPLEPKAEP. The span at 169–179 shows a compositional bias: polar residues; it reads ISISTDDGSTG. The segment covering 180-189 has biased composition (acidic residues); sequence ENEDVAESEA. Low complexity predominate over residues 233–242; the sequence is SFSGSESSSG. A compositionally biased stretch (basic and acidic residues) spans 339-359; it reads AKDKADQTGTKQVDDGKKPRE.

Belongs to the Ninja family.

It is found in the nucleus. This Zea mays (Maize) protein is Ninja-family protein 7.